The primary structure comprises 182 residues: ATP synthase subunit delta (182 aa).

The protein belongs to the ATPase delta chain family. As to quaternary structure, F-type ATPases have 2 components, F(1) - the catalytic core - and F(0) - the membrane proton channel. F(1) has five subunits: alpha(3), beta(3), gamma(1), delta(1), epsilon(1). F(0) has three main subunits: a(1), b(2) and c(10-14). The alpha and beta chains form an alternating ring which encloses part of the gamma chain. F(1) is attached to F(0) by a central stalk formed by the gamma and epsilon chains, while a peripheral stalk is formed by the delta and b chains.

The protein localises to the cell membrane. Its function is as follows. F(1)F(0) ATP synthase produces ATP from ADP in the presence of a proton or sodium gradient. F-type ATPases consist of two structural domains, F(1) containing the extramembraneous catalytic core and F(0) containing the membrane proton channel, linked together by a central stalk and a peripheral stalk. During catalysis, ATP synthesis in the catalytic domain of F(1) is coupled via a rotary mechanism of the central stalk subunits to proton translocation. Functionally, this protein is part of the stalk that links CF(0) to CF(1). It either transmits conformational changes from CF(0) to CF(1) or is implicated in proton conduction. The chain is ATP synthase subunit delta from Syntrophomonas wolfei subsp. wolfei (strain DSM 2245B / Goettingen).